The sequence spans 143 residues: D-aminoacyl-tRNA deacylase (143 aa).

The short motif at 135-136 (GP) is the Gly-cisPro motif, important for rejection of L-amino acids element.

This sequence belongs to the DTD family. Homodimer.

Its subcellular location is the cytoplasm. The catalysed reaction is glycyl-tRNA(Ala) + H2O = tRNA(Ala) + glycine + H(+). It catalyses the reaction a D-aminoacyl-tRNA + H2O = a tRNA + a D-alpha-amino acid + H(+). Its function is as follows. An aminoacyl-tRNA editing enzyme that deacylates mischarged D-aminoacyl-tRNAs. Also deacylates mischarged glycyl-tRNA(Ala), protecting cells against glycine mischarging by AlaRS. Acts via tRNA-based rather than protein-based catalysis; rejects L-amino acids rather than detecting D-amino acids in the active site. By recycling D-aminoacyl-tRNA to D-amino acids and free tRNA molecules, this enzyme counteracts the toxicity associated with the formation of D-aminoacyl-tRNA entities in vivo and helps enforce protein L-homochirality. In Mycolicibacterium paratuberculosis (strain ATCC BAA-968 / K-10) (Mycobacterium paratuberculosis), this protein is D-aminoacyl-tRNA deacylase.